We begin with the raw amino-acid sequence, 464 residues long: NADH-quinone oxidoreductase subunit N (464 aa).

Transmembrane regions (helical) follow at residues M5–L25, L31–L51, L63–S83, E96–S116, L117–V137, L152–A172, G188–F208, V242–L262, M286–L303, A312–A332, A358–M378, V393–L415, and L436–F456.

This sequence belongs to the complex I subunit 2 family. As to quaternary structure, NDH-1 is composed of 14 different subunits. Subunits NuoA, H, J, K, L, M, N constitute the membrane sector of the complex.

It is found in the cell inner membrane. The catalysed reaction is a quinone + NADH + 5 H(+)(in) = a quinol + NAD(+) + 4 H(+)(out). Functionally, NDH-1 shuttles electrons from NADH, via FMN and iron-sulfur (Fe-S) centers, to quinones in the respiratory chain. The immediate electron acceptor for the enzyme in this species is believed to be ubiquinone. Couples the redox reaction to proton translocation (for every two electrons transferred, four hydrogen ions are translocated across the cytoplasmic membrane), and thus conserves the redox energy in a proton gradient. This Syntrophotalea carbinolica (strain DSM 2380 / NBRC 103641 / GraBd1) (Pelobacter carbinolicus) protein is NADH-quinone oxidoreductase subunit N.